A 382-amino-acid chain; its full sequence is D-galactonate dehydratase (382 aa).

Residue Asp-183 coordinates Mg(2+). Residue His-185 is the Proton donor of the active site. Residues Glu-209 and Glu-235 each contribute to the Mg(2+) site. Residue His-285 is the Proton acceptor of the active site.

It belongs to the mandelate racemase/muconate lactonizing enzyme family. GalD subfamily. Mg(2+) serves as cofactor.

The enzyme catalyses D-galactonate = 2-dehydro-3-deoxy-D-galactonate + H2O. It functions in the pathway carbohydrate acid metabolism; D-galactonate degradation; D-glyceraldehyde 3-phosphate and pyruvate from D-galactonate: step 1/3. Functionally, catalyzes the dehydration of D-galactonate to 2-keto-3-deoxy-D-galactonate. This chain is D-galactonate dehydratase, found in Salmonella dublin (strain CT_02021853).